The chain runs to 195 residues: Probable GTP-binding protein EngB (195 aa).

In terms of domain architecture, EngB-type G spans 22–195; that stretch reads GRPEVALAGR…WAALLPFVAS (174 aa). GTP-binding positions include 30–37, 57–61, 75–78, 142–145, and 174–176; these read GRSNVGKS, GKTQT, DVPG, TKAD, and FSA. Mg(2+)-binding residues include Ser-37 and Thr-59.

This sequence belongs to the TRAFAC class TrmE-Era-EngA-EngB-Septin-like GTPase superfamily. EngB GTPase family. Mg(2+) is required as a cofactor.

Necessary for normal cell division and for the maintenance of normal septation. The protein is Probable GTP-binding protein EngB of Geobacillus kaustophilus (strain HTA426).